Reading from the N-terminus, the 185-residue chain is Elongation factor P (185 aa).

It belongs to the elongation factor P family.

Its subcellular location is the cytoplasm. It functions in the pathway protein biosynthesis; polypeptide chain elongation. Involved in peptide bond synthesis. Stimulates efficient translation and peptide-bond synthesis on native or reconstituted 70S ribosomes in vitro. Probably functions indirectly by altering the affinity of the ribosome for aminoacyl-tRNA, thus increasing their reactivity as acceptors for peptidyl transferase. In Brevibacillus brevis (strain 47 / JCM 6285 / NBRC 100599), this protein is Elongation factor P.